The following is a 320-amino-acid chain: ATP-dependent 6-phosphofructokinase isozyme 1 (320 aa).

An ATP-binding site is contributed by Gly-12. Residues 22–26 and 55–60 contribute to the ADP site; these read RGVVR and RYSVSD. ATP-binding positions include 73–74 and 103–106; these read RF and GDGS. Position 104 (Asp-104) interacts with Mg(2+). Substrate is bound at residue 126-128; it reads TID. The Proton acceptor role is filled by Asp-128. An ADP-binding site is contributed by Arg-155. Residues Arg-163 and 170 to 172 contribute to the substrate site; that span reads MGR. Residues 186–188, Lys-212, and 214–216 each bind ADP; these read GCE and KKH. Substrate-binding positions include Glu-223, Arg-244, and 250–253; that span reads HIQR.

Belongs to the phosphofructokinase type A (PFKA) family. ATP-dependent PFK group I subfamily. Prokaryotic clade 'B1' sub-subfamily. In terms of assembly, homotetramer. Mg(2+) serves as cofactor.

The protein resides in the cytoplasm. It carries out the reaction beta-D-fructose 6-phosphate + ATP = beta-D-fructose 1,6-bisphosphate + ADP + H(+). It functions in the pathway carbohydrate degradation; glycolysis; D-glyceraldehyde 3-phosphate and glycerone phosphate from D-glucose: step 3/4. With respect to regulation, allosterically activated by ADP and other diphosphonucleosides, and allosterically inhibited by phosphoenolpyruvate. Its function is as follows. Catalyzes the phosphorylation of D-fructose 6-phosphate to fructose 1,6-bisphosphate by ATP, the first committing step of glycolysis. This is ATP-dependent 6-phosphofructokinase isozyme 1 from Shigella boydii serotype 18 (strain CDC 3083-94 / BS512).